Here is a 489-residue protein sequence, read N- to C-terminus: Aerolysin (489 aa).

An N-terminal signal peptide occupies residues 1 to 24 (MMNRIITANLANLASSLMLAQVLG). Intrachain disulfides connect C44/C100 and C184/C189. The interval 70 to 86 (WQITGLADRWVIMGPGY) is interaction with host N-linked glycan. A part of the transmembrane beta-barrel after proteolytic activation of the toxin and insertion into the host membrane region spans residues 257 to 289 (YSLSEKVTTKNKFQWPLVGETELAIEIAASQSW). Positions 347-356 (RWGGNAWYTH) are interaction with glycans from host GPI-anchor. A propeptide spanning residues 445 to 489 (TRSAKAAQLRSASAEEVALTSVDLDSEALANEGFGNVSLTIVPVQ) is cleaved from the precursor.

Belongs to the aerolysin family. Homodimer in solution; homoheptamer in the host membrane. After binding to GPI-anchored proteins in target membranes and proteolytic removal of the C-terminal propeptide, the protein assembles into a heptameric pre-pore complex. A further conformation change leads to insertion into the host membrane. Proteolytic cleavage and subsequent release of the propeptide trigger a major conformation change, leading to the formation of a heptameric pre-pore that then inserts into the host membrane.

It localises to the secreted. Its subcellular location is the host cell membrane. Its function is as follows. Secreted, cytolytic toxin that forms pores in host membranes after proteolytic removal of a C-terminal propeptide, leading to destruction of the membrane permeability barrier and cell death. The pores are formed by transmembrane beta-strands and are approximately 3 nm in diameter. The protein is Aerolysin (ash3) of Aeromonas salmonicida.